The following is a 1267-amino-acid chain: RNA-directed RNA polymerase lambda-3 (1267 aa).

Positions 555–792 (LSPTSGSAVI…KLYFIFGCRI (238 aa)) constitute a RdRp catalytic domain.

The protein belongs to the reoviridae RNA-directed RNA polymerase family.

Its subcellular location is the virion. The catalysed reaction is RNA(n) + a ribonucleoside 5'-triphosphate = RNA(n+1) + diphosphate. Functionally, RNA-directed RNA polymerase that is involved in transcription and genome replication. Following infection, it catalyzes the synthesis of fully conservative plus strands. After core assembly, which consists in recruitment of one capped plus-strand for each genomic segments and polymerase complexes, the polymerase switches mode and catalyzes the synthesis of complementary minus-strands. This Reovirus type 3 (strain Dearing) (T3D) protein is RNA-directed RNA polymerase lambda-3 (L1).